We begin with the raw amino-acid sequence, 208 residues long: ATP-dependent Clp protease proteolytic subunit (208 aa).

The Nucleophile role is filled by Ser-107. Residue His-132 is part of the active site.

Belongs to the peptidase S14 family. Fourteen ClpP subunits assemble into 2 heptameric rings which stack back to back to give a disk-like structure with a central cavity, resembling the structure of eukaryotic proteasomes.

It localises to the cytoplasm. It carries out the reaction Hydrolysis of proteins to small peptides in the presence of ATP and magnesium. alpha-casein is the usual test substrate. In the absence of ATP, only oligopeptides shorter than five residues are hydrolyzed (such as succinyl-Leu-Tyr-|-NHMec, and Leu-Tyr-Leu-|-Tyr-Trp, in which cleavage of the -Tyr-|-Leu- and -Tyr-|-Trp bonds also occurs).. Functionally, cleaves peptides in various proteins in a process that requires ATP hydrolysis. Has a chymotrypsin-like activity. Plays a major role in the degradation of misfolded proteins. The chain is ATP-dependent Clp protease proteolytic subunit from Methylobacterium radiotolerans (strain ATCC 27329 / DSM 1819 / JCM 2831 / NBRC 15690 / NCIMB 10815 / 0-1).